We begin with the raw amino-acid sequence, 446 residues long: Low-affinity gluconate transporter (446 aa).

Residue Met-1 is a topological domain, cytoplasmic. A helical membrane pass occupies residues 2-22 (TTLTLVLTAVGSVLLLLFLVM). Residues 23–26 (KARM) lie on the Periplasmic side of the membrane. A helical transmembrane segment spans residues 27–47 (HAFLALMVVSMGAGLFSGMPL). At 48-58 (DKIAATMEKGM) the chain is on the cytoplasmic side. A helical transmembrane segment spans residues 59–79 (GGTLGFLAVVVALGAMFGKIL). Topologically, residues 80-109 (HETGAVDQIAVKMLKSFGHSRAHYAIGLAG) are periplasmic. A helical membrane pass occupies residues 110 to 130 (LVCALPLFFEVAIVLLISVAF). Residues 131–142 (SMARHTGTNLVK) lie on the Cytoplasmic side of the membrane. Residues 143–163 (LVIPLFAGVAAAAAFLVPGPA) form a helical membrane-spanning segment. The Periplasmic portion of the chain corresponds to 164 to 176 (PMLLASQMNADFG). The helical transmembrane segment at 177-197 (WMILIGLCAAIPGMIIAGPLW) threads the bilayer. Residues 198 to 225 (GNFISRYVELHIPDDISEPHLGEGKMPS) lie on the Cytoplasmic side of the membrane. Residues 226–246 (FGFSLSLILLPLVLVGLKTIA) form a helical membrane-spanning segment. Residues 247 to 261 (ARFVPEGSTAYEWFE) are Periplasmic-facing. A helical transmembrane segment spans residues 262–282 (FIGHPFTAILVACLVAIYGLA). The Cytoplasmic portion of the chain corresponds to 283 to 294 (MRQGMPKDKVME). A helical transmembrane segment spans residues 295 to 315 (ICGHALQPAGIILLVIGAGGV). The Periplasmic portion of the chain corresponds to 316–330 (FKQVLVDSGVGPALG). The helical transmembrane segment at 331 to 351 (EALTGMGLPIAITCFVLAAAV) threads the bilayer. Residue Arg-352 is a topological domain, cytoplasmic. The chain crosses the membrane as a helical span at residues 353 to 373 (IIQGSATVACLTAVGLVMPVI). Topologically, residues 374–387 (EQLNYSGAQMAALS) are periplasmic. A helical membrane pass occupies residues 388-408 (ICIAGGSIVVSHVNDAGFWLF). Residues 409-424 (GKFTGATEAETLKTWT) are Cytoplasmic-facing. Residues 425–445 (MMETILGTVGAIVGMIAFQLL) form a helical membrane-spanning segment. Residue Ser-446 is a topological domain, periplasmic.

Belongs to the GntP permease family.

The protein resides in the cell inner membrane. Its function is as follows. Part of the gluconate utilization system Gnt-I; low-affinity intake of gluconate. The protein is Low-affinity gluconate transporter (gntU) of Escherichia coli O157:H7.